Reading from the N-terminus, the 483-residue chain is Cytochrome P450 71A23 (483 aa).

The helical transmembrane segment at 1–21 (MILFLCLIILFIITILFFKKH) threads the bilayer. Heme is bound at residue cysteine 429.

The protein belongs to the cytochrome P450 family. Heme serves as cofactor.

The protein localises to the membrane. The sequence is that of Cytochrome P450 71A23 (CYP71A23) from Arabidopsis thaliana (Mouse-ear cress).